The following is a 314-amino-acid chain: Ribosomal RNA small subunit methyltransferase H 2 (314 aa).

Residues 33–35 (AGH), Asp-53, Tyr-80, Asp-101, and Gln-108 each bind S-adenosyl-L-methionine. A disordered region spans residues 293–314 (KELEENSRSKSAKLRVFEKNDL).

It belongs to the methyltransferase superfamily. RsmH family.

Its subcellular location is the cytoplasm. The catalysed reaction is cytidine(1402) in 16S rRNA + S-adenosyl-L-methionine = N(4)-methylcytidine(1402) in 16S rRNA + S-adenosyl-L-homocysteine + H(+). Specifically methylates the N4 position of cytidine in position 1402 (C1402) of 16S rRNA. The sequence is that of Ribosomal RNA small subunit methyltransferase H 2 from Agathobacter rectalis (strain ATCC 33656 / DSM 3377 / JCM 17463 / KCTC 5835 / VPI 0990) (Eubacterium rectale).